The primary structure comprises 475 residues: Ribulose bisphosphate carboxylase large chain (475 aa).

Positions 1 to 2 (MS) are excised as a propeptide. P3 carries the N-acetylproline modification. Position 14 is an N6,N6,N6-trimethyllysine (K14). Substrate contacts are provided by N123 and T173. K175 serves as the catalytic Proton acceptor. Substrate is bound at residue K177. Mg(2+) contacts are provided by K201, D203, and E204. N6-carboxylysine is present on K201. H294 (proton acceptor) is an active-site residue. Residues R295, H327, and S379 each contribute to the substrate site.

The protein belongs to the RuBisCO large chain family. Type I subfamily. As to quaternary structure, heterohexadecamer of 8 large chains and 8 small chains; disulfide-linked. The disulfide link is formed within the large subunit homodimers. Mg(2+) is required as a cofactor. Post-translationally, the disulfide bond which can form in the large chain dimeric partners within the hexadecamer appears to be associated with oxidative stress and protein turnover.

Its subcellular location is the plastid. The protein localises to the chloroplast. The enzyme catalyses 2 (2R)-3-phosphoglycerate + 2 H(+) = D-ribulose 1,5-bisphosphate + CO2 + H2O. The catalysed reaction is D-ribulose 1,5-bisphosphate + O2 = 2-phosphoglycolate + (2R)-3-phosphoglycerate + 2 H(+). Its function is as follows. RuBisCO catalyzes two reactions: the carboxylation of D-ribulose 1,5-bisphosphate, the primary event in carbon dioxide fixation, as well as the oxidative fragmentation of the pentose substrate in the photorespiration process. Both reactions occur simultaneously and in competition at the same active site. This Cucumis sativus (Cucumber) protein is Ribulose bisphosphate carboxylase large chain (rbcL).